The following is a 414-amino-acid chain: Multifunctional CCA protein (414 aa).

2 residues coordinate ATP: G8 and R11. Positions 8 and 11 each coordinate CTP. Positions 21 and 23 each coordinate Mg(2+). Positions 91, 137, and 140 each coordinate ATP. Residues R91, R137, and R140 each contribute to the CTP site. An HD domain is found at 228 to 329; sequence TGIHTLMVLE…VKLFDKGDFW (102 aa).

Belongs to the tRNA nucleotidyltransferase/poly(A) polymerase family. Bacterial CCA-adding enzyme type 1 subfamily. As to quaternary structure, monomer. Can also form homodimers and oligomers. The cofactor is Mg(2+). Ni(2+) is required as a cofactor.

The enzyme catalyses a tRNA precursor + 2 CTP + ATP = a tRNA with a 3' CCA end + 3 diphosphate. It carries out the reaction a tRNA with a 3' CCA end + 2 CTP + ATP = a tRNA with a 3' CCACCA end + 3 diphosphate. Functionally, catalyzes the addition and repair of the essential 3'-terminal CCA sequence in tRNAs without using a nucleic acid template. Adds these three nucleotides in the order of C, C, and A to the tRNA nucleotide-73, using CTP and ATP as substrates and producing inorganic pyrophosphate. tRNA 3'-terminal CCA addition is required both for tRNA processing and repair. Also involved in tRNA surveillance by mediating tandem CCA addition to generate a CCACCA at the 3' terminus of unstable tRNAs. While stable tRNAs receive only 3'-terminal CCA, unstable tRNAs are marked with CCACCA and rapidly degraded. The sequence is that of Multifunctional CCA protein from Shewanella frigidimarina (strain NCIMB 400).